The following is a 336-amino-acid chain: Retinol dehydrogenase 14 (336 aa).

The residue at position 5 (threonine 5) is a Phosphothreonine. 50–56 is a binding site for NADP(+); sequence GANSGLG. Residue serine 192 participates in substrate binding. Tyrosine 217 (proton acceptor) is an active-site residue.

It belongs to the short-chain dehydrogenases/reductases (SDR) family. As to expression, widely expressed.

The enzyme catalyses all-trans-retinol + NADP(+) = all-trans-retinal + NADPH + H(+). It catalyses the reaction 9-cis-retinol + NADP(+) = 9-cis-retinal + NADPH + H(+). The catalysed reaction is 11-cis-retinol + NADP(+) = 11-cis-retinal + NADPH + H(+). It participates in cofactor metabolism; retinol metabolism. Functionally, retinol dehydrogenase with a clear preference for NADP. Displays high activity towards 9-cis, 11-cis and all-trans-retinol. Shows a very weak activity towards 13-cis-retinol. Has no activity towards steroid. The chain is Retinol dehydrogenase 14 (RDH14) from Homo sapiens (Human).